Consider the following 624-residue polypeptide: MAKQEQRFDYVKIALASPERIRQWGERTLPNGQVVGEVTKPETINYRTLKPEMDGLFCEKIFGPAKDWECHCGKYKRVQHRGIVCERCGVEVTEPRVRRHRMGFIKLAAPVAHVWYLKGIPSYIAILLDMPLRDVEQIVYFNSYVVLNPDNHSELQYKQLLNEDQWMEIEDQIYAEESDLEGIEVGIGAEALQQLLQDLNLNEESEKLRQEIAESKGQKRAKLIKRLRVIDNFIGTESRPEWMVLNVIPVIPPDLRPMVQLDGGRFATSDLNDLYRRVINRNNRLARLQEILAPEIIVRNEKRMLQEAVDALIDNGRRGRTVVGANNRPLKSLSDIIEGKQGRFRQNLLGKRVDYSGRSVIVVGPNLKIHQCGLPREMAIELFQPFVIHRLIKNHSINNIKQAKKLIQKNDPLIWDVLEEVIEGHPVMLNRAPTLHRLGIQAFEPILVEGRAIQLHPLVCPAFNADFDGDQMAVHVPLSIEAQAEARMLMLASGNILSPATGQPIVTPSQDMVLGCYYLTAENPGAQKGAGRYFANLEDAIRAFEQGSVDLHAWVWVRFDGEVESEGESDEPESVVAADDGTVTKTYRFRRIRETEDGQRLSQYVKTAPGRILFNNTVQTALIH.

Cysteine 70, cysteine 72, cysteine 85, and cysteine 88 together coordinate Zn(2+). Positions 466, 468, and 470 each coordinate Mg(2+).

The protein belongs to the RNA polymerase beta' chain family. RpoC1 subfamily. In terms of assembly, in cyanobacteria the RNAP catalytic core is composed of 2 alpha, 1 beta, 1 beta', 1 gamma and 1 omega subunit. When a sigma factor is associated with the core the holoenzyme is formed, which can initiate transcription. Mg(2+) serves as cofactor. Requires Zn(2+) as cofactor.

The catalysed reaction is RNA(n) + a ribonucleoside 5'-triphosphate = RNA(n+1) + diphosphate. Its function is as follows. DNA-dependent RNA polymerase catalyzes the transcription of DNA into RNA using the four ribonucleoside triphosphates as substrates. In Synechococcus sp. (strain ATCC 27144 / PCC 6301 / SAUG 1402/1) (Anacystis nidulans), this protein is DNA-directed RNA polymerase subunit gamma.